The primary structure comprises 361 residues: Peptide chain release factor 1 (361 aa).

Q235 bears the N5-methylglutamine mark.

The protein belongs to the prokaryotic/mitochondrial release factor family. Methylated by PrmC. Methylation increases the termination efficiency of RF1.

The protein resides in the cytoplasm. Its function is as follows. Peptide chain release factor 1 directs the termination of translation in response to the peptide chain termination codons UAG and UAA. The chain is Peptide chain release factor 1 from Rhodopseudomonas palustris (strain ATCC BAA-98 / CGA009).